A 504-amino-acid polypeptide reads, in one-letter code: Taurochenodeoxycholic 6 alpha-hydroxylase (504 aa).

Transmembrane regions (helical) follow at residues Leu-6 to Leu-26 and Ala-110 to Gly-130. Cys-451 is a binding site for heme.

It belongs to the cytochrome P450 family. Heme serves as cofactor. Primarily expressed in liver. Low expression in kidney.

It localises to the endoplasmic reticulum membrane. The catalysed reaction is taurochenodeoxycholate + reduced [NADPH--hemoprotein reductase] + O2 = taurohyocholate + oxidized [NADPH--hemoprotein reductase] + H2O + H(+). It catalyses the reaction lithocholate + reduced [NADPH--hemoprotein reductase] + O2 = hyodeoxycholate + oxidized [NADPH--hemoprotein reductase] + H2O + H(+). Its function is as follows. Catalyzes the 6 alpha hydroxylation oxidation of taurodeoxycholate to produce the pig specific bile acid taurohyocholic acid. This Sus scrofa (Pig) protein is Taurochenodeoxycholic 6 alpha-hydroxylase (CYP4A21).